The sequence spans 166 residues: NAD(P)H-quinone oxidoreductase subunit I, chloroplastic (166 aa).

2 4Fe-4S ferredoxin-type domains span residues 55 to 84 and 95 to 124; these read GRIH…VDWK and LNYS…MTEE. [4Fe-4S] cluster-binding residues include Cys64, Cys67, Cys70, Cys74, Cys104, Cys107, Cys110, and Cys114.

Belongs to the complex I 23 kDa subunit family. NDH is composed of at least 16 different subunits, 5 of which are encoded in the nucleus. [4Fe-4S] cluster is required as a cofactor.

Its subcellular location is the plastid. It is found in the chloroplast thylakoid membrane. The catalysed reaction is a plastoquinone + NADH + (n+1) H(+)(in) = a plastoquinol + NAD(+) + n H(+)(out). It carries out the reaction a plastoquinone + NADPH + (n+1) H(+)(in) = a plastoquinol + NADP(+) + n H(+)(out). Its function is as follows. NDH shuttles electrons from NAD(P)H:plastoquinone, via FMN and iron-sulfur (Fe-S) centers, to quinones in the photosynthetic chain and possibly in a chloroplast respiratory chain. The immediate electron acceptor for the enzyme in this species is believed to be plastoquinone. Couples the redox reaction to proton translocation, and thus conserves the redox energy in a proton gradient. The polypeptide is NAD(P)H-quinone oxidoreductase subunit I, chloroplastic (Chaetymenia peduncularis (Daisy)).